The primary structure comprises 187 residues: Ribose 1,5-bisphosphate phosphokinase PhnN (187 aa).

10–17 (GPSGSGKD) contributes to the ATP binding site.

This sequence belongs to the ribose 1,5-bisphosphokinase family.

The enzyme catalyses alpha-D-ribose 1,5-bisphosphate + ATP = 5-phospho-alpha-D-ribose 1-diphosphate + ADP. It participates in metabolic intermediate biosynthesis; 5-phospho-alpha-D-ribose 1-diphosphate biosynthesis; 5-phospho-alpha-D-ribose 1-diphosphate from D-ribose 5-phosphate (route II): step 3/3. Its function is as follows. Catalyzes the phosphorylation of ribose 1,5-bisphosphate to 5-phospho-D-ribosyl alpha-1-diphosphate (PRPP). This is Ribose 1,5-bisphosphate phosphokinase PhnN from Klebsiella pneumoniae subsp. pneumoniae (strain ATCC 700721 / MGH 78578).